Reading from the N-terminus, the 367-residue chain is Cellular tumor antigen p53 (367 aa).

Residues M1–N47 are transcription activation (acidic). A DNA-binding region spans residues D86–M273. Zn(2+)-binding residues include C160, H163, C219, and C223. The tract at residues R254–R261 is interaction with DNA. A compositionally biased stretch (basic and acidic residues) spans D262–D279. Disordered stretches follow at residues D262–D306 and D332–D367. Positions K282 to A300 match the Bipartite nuclear localization signal motif. Residues S291–S302 are compositionally biased toward low complexity. The oligomerization stretch occupies residues N308–K337. The Nuclear export signal motif lies at E322 to L333. The segment at A342–K363 is basic (repression of DNA-binding).

It belongs to the p53 family. Binds DNA as a homotetramer. Zn(2+) is required as a cofactor.

The protein localises to the cytoplasm. It localises to the nucleus. Its function is as follows. Multifunctional transcription factor that induces cell cycle arrest, DNA repair or apoptosis upon binding to its target DNA sequence. Acts as a tumor suppressor in many tumor types; induces growth arrest or apoptosis depending on the physiological circumstances and cell type. Negatively regulates cell division by controlling expression of a set of genes required for this process. One of the activated genes is an inhibitor of cyclin-dependent kinases. Apoptosis induction seems to be mediated either by stimulation of BAX and FAS antigen expression, or by repression of Bcl-2 expression. In Tetraodon miurus (Congo puffer), this protein is Cellular tumor antigen p53 (tp53).